Reading from the N-terminus, the 254-residue chain is UPF0173 protein YddR (254 aa).

Belongs to the UPF0173 family.

The polypeptide is UPF0173 protein YddR (yddR) (Bacillus subtilis (strain 168)).